The primary structure comprises 160 residues: Cyclic pyranopterin monophosphate synthase (160 aa).

Substrate is bound by residues 76-78 (LCH) and 114-115 (ME). Residue Asp-129 is part of the active site.

It belongs to the MoaC family. In terms of assembly, homohexamer; trimer of dimers.

The catalysed reaction is (8S)-3',8-cyclo-7,8-dihydroguanosine 5'-triphosphate = cyclic pyranopterin phosphate + diphosphate. It functions in the pathway cofactor biosynthesis; molybdopterin biosynthesis. Catalyzes the conversion of (8S)-3',8-cyclo-7,8-dihydroguanosine 5'-triphosphate to cyclic pyranopterin monophosphate (cPMP). This chain is Cyclic pyranopterin monophosphate synthase, found in Mesorhizobium japonicum (strain LMG 29417 / CECT 9101 / MAFF 303099) (Mesorhizobium loti (strain MAFF 303099)).